Reading from the N-terminus, the 713-residue chain is Polyribonucleotide nucleotidyltransferase (713 aa).

Mg(2+)-binding residues include Asp-493 and Asp-499. In terms of domain architecture, KH spans 560 to 619 (PRMITIKINPEKIRDVIGKGGSVIRALTEETGTTIDISDDGVVTIASTNSEGMAEAKKRI). The 69-residue stretch at 629–697 (GHVYEGTVLK…EKGRVRLSAK (69 aa)) folds into the S1 motif domain.

This sequence belongs to the polyribonucleotide nucleotidyltransferase family. It depends on Mg(2+) as a cofactor.

Its subcellular location is the cytoplasm. The enzyme catalyses RNA(n+1) + phosphate = RNA(n) + a ribonucleoside 5'-diphosphate. In terms of biological role, involved in mRNA degradation. Catalyzes the phosphorolysis of single-stranded polyribonucleotides processively in the 3'- to 5'-direction. The polypeptide is Polyribonucleotide nucleotidyltransferase (Burkholderia pseudomallei (strain 1106a)).